Consider the following 361-residue polypeptide: Serine/threonine-protein kinase SRK2I (361 aa).

Residues 22 to 278 (YDFVKDIGSG…IPEIKTHSWF (257 aa)) form the Protein kinase domain. ATP is bound by residues 28 to 36 (IGSGNFGVA) and K51. D141 (proton acceptor) is an active-site residue.

The protein belongs to the protein kinase superfamily. Ser/Thr protein kinase family. Interacts with ABI1. Interacts with I-2 and TOPP1. Interacts with FREE1 (via C-terminus). In terms of processing, autophosphorylated in vitro. Expressed at low levels in seeds, seedlings, roots (especially in tips), stems, leaves, shoots, flowers and siliques.

It catalyses the reaction L-seryl-[protein] + ATP = O-phospho-L-seryl-[protein] + ADP + H(+). The enzyme catalyses L-threonyl-[protein] + ATP = O-phospho-L-threonyl-[protein] + ADP + H(+). Its activity is regulated as follows. Activated by autophosphorylation of its activation loop. Functionally, together with SRK2D, key component and activator of the abscisic acid (ABA) signaling pathway that regulates numerous ABA responses, such as seed germination, Pro accumulation, root growth inhibition, dormancy and seedling growth, and, to a lesser extent, stomatal closure. In response to ABA, phosphorylates the ESCRT-I complex component FREE1, which is required for ABA-induced FREE1 nuclear import. This Arabidopsis thaliana (Mouse-ear cress) protein is Serine/threonine-protein kinase SRK2I (SRK2I).